Reading from the N-terminus, the 298-residue chain is Glutamyl-Q tRNA(Asp) synthetase (298 aa).

Residues 9-13 and Glu45 contribute to the L-glutamate site; that span reads RFAPS. Positions 12-22 match the 'HIGH' region motif; that stretch reads PSPSGELHFGS. Zn(2+) is bound by residues Cys101, Cys103, Tyr115, and Cys119. The L-glutamate site is built by Tyr172 and Arg190. Positions 228-232 match the 'KMSKS' region motif; the sequence is KLSKQ. Lys231 lines the ATP pocket.

The protein belongs to the class-I aminoacyl-tRNA synthetase family. GluQ subfamily. Requires Zn(2+) as cofactor.

In terms of biological role, catalyzes the tRNA-independent activation of glutamate in presence of ATP and the subsequent transfer of glutamate onto a tRNA(Asp). Glutamate is transferred on the 2-amino-5-(4,5-dihydroxy-2-cyclopenten-1-yl) moiety of the queuosine in the wobble position of the QUC anticodon. The protein is Glutamyl-Q tRNA(Asp) synthetase of Salmonella paratyphi A (strain ATCC 9150 / SARB42).